Reading from the N-terminus, the 139-residue chain is Putative pre-16S rRNA nuclease (139 aa).

The protein belongs to the YqgF nuclease family.

The protein localises to the cytoplasm. Functionally, could be a nuclease involved in processing of the 5'-end of pre-16S rRNA. This is Putative pre-16S rRNA nuclease from Streptococcus agalactiae serotype Ia (strain ATCC 27591 / A909 / CDC SS700).